The sequence spans 98 residues: Small ribosomal subunit protein bS6 (98 aa).

This sequence belongs to the bacterial ribosomal protein bS6 family.

In terms of biological role, binds together with bS18 to 16S ribosomal RNA. The sequence is that of Small ribosomal subunit protein bS6 from Lactobacillus johnsonii (strain CNCM I-12250 / La1 / NCC 533).